Consider the following 498-residue polypeptide: Flavin-dependent halogenase otaD (498 aa).

Positions 14, 17, and 47 each coordinate FAD. Chloride contacts are provided by S326 and G327. V328 contacts FAD.

This sequence belongs to the flavin-dependent halogenase family.

The catalysed reaction is ochratoxin B + FADH2 + chloride + O2 = ochratoxin A + FAD + 2 H2O. It participates in mycotoxin biosynthesis. Functionally, flavin-dependent halogenase; part of the gene cluster that mediates the biosynthesis of ochratoxin A (OTA), a mycotoxin composed of a chlorinated type I polyketide dihydroisocoumarin moiety linked to L-phenylalanine, and demonstrated to have nephrotoxic, immunotoxic, genotoxic, neurotoxic, and teratogenic properties. OtaD chlorinates ochratoxin B (OTB) at the C-5 position to form OTA. The pathway begins with the highly reducing polyketide synthase otaA that catalyzes the formation of the isocoumarin group during the initial stages of biosynthesis, starting from one acetate and 4 malonate units, to originate the characteristic pentaketide skeleton 7-methylmellein (7-MM) of the OTA molecule. The newly identified cyclase otaY might be involved in the polyketide cyclization reaction during the initial steps of the OTA biosynthesis. 7-MM is then oxidized into 7-carboxymellein (also called ochratoxin beta) by the cytochrome P450 monooxygenase otaC. The NRPS encoded by the otaB gene is involved in the linking of phenylalanine to the dihydroisocoumarin ring. The reaction catalyzed by NRPS results in the production of ochratoxin B (OTB), which is the non-chlorinated analog of OTA and which subsequently serves as the substrate of the halogenase otaD for chlorination activity to form the final molecular structure of OTA, containing a chlorine atom in the C-5 position of the molecule. The protein is Flavin-dependent halogenase otaD of Aspergillus carbonarius (strain ITEM 5010).